We begin with the raw amino-acid sequence, 277 residues long: Carbonyl reductase [NADPH] 1 (277 aa).

Residue Ser-2 is modified to N-acetylserine. A phosphoserine mark is found at Ser-2 and Ser-30. Residues 10–34 (VTGA…GDVV), 63–64 (DI), and Asn-90 contribute to the NADP(+) site. Residues 95–97 (FKV) and Gln-106 contribute to the glutathione site. Ser-140 is a substrate binding site. 193-194 (AY) is a glutathione binding site. Tyr-194 acts as the Proton acceptor in catalysis. NADP(+)-binding positions include 194–198 (YGVTK) and 231–233 (VRT). An N6-1-carboxyethyl lysine modification is found at Lys-239. The tract at residues 258 to 277 (PPDAEGPHGQFVQDKKVEPW) is disordered.

The protein belongs to the short-chain dehydrogenases/reductases (SDR) family. In terms of assembly, monomer.

Its subcellular location is the cytoplasm. It catalyses the reaction a secondary alcohol + NADP(+) = a ketone + NADPH + H(+). The enzyme catalyses prostaglandin F2alpha + NADP(+) = prostaglandin E2 + NADPH + H(+). The catalysed reaction is prostaglandin E1 + NADP(+) = 15-oxoprostaglandin E1 + NADPH + H(+). It carries out the reaction menadione + NADPH + H(+) = menadiol + NADP(+). It catalyses the reaction prostaglandin D2 + NADP(+) = 15-oxoprostaglandin D2 + NADPH + H(+). The enzyme catalyses prostaglandin E2 + NADP(+) = 15-oxoprostaglandin E2 + NADPH + H(+). The catalysed reaction is prostaglandin F2alpha + NADP(+) = 15-oxoprostaglandin F2alpha + NADPH + H(+). It carries out the reaction daunorubicin + NADPH + H(+) = 13-dihydrodaunorubicin + NADP(+). It catalyses the reaction S-nitrosoglutathione + NADPH + H(+) = S-(hydroxysulfenamide)glutathione + NADP(+). The enzyme catalyses corticosterone + NADPH + H(+) = 20beta-dihydrocorticosterone + NADP(+). The catalysed reaction is a primary alcohol + NADP(+) = an aldehyde + NADPH + H(+). It carries out the reaction cortisol + NADPH + H(+) = 20beta-dihydrocortisol + NADP(+). In terms of biological role, NADPH-dependent reductase with broad substrate specificity. Catalyzes the reduction of a wide variety of carbonyl compounds including quinones, prostaglandins, menadione, plus various xenobiotics. Catalyzes the reduction of the antitumor anthracyclines doxorubicin and daunorubicin to the cardiotoxic compounds doxorubicinol and daunorubicinol. Can convert prostaglandin E to prostaglandin F2-alpha. Can bind glutathione, which explains its higher affinity for glutathione-conjugated substrates. Catalyzes the reduction of S-nitrosoglutathione. In addition, participates in the glucocorticoid metabolism by catalyzing the NADPH-dependent cortisol/corticosterone into 20beta-dihydrocortisol (20b-DHF) or 20beta-corticosterone (20b-DHB), which are weak agonists of NR3C1 and NR3C2 in adipose tissue. In Mus musculus (Mouse), this protein is Carbonyl reductase [NADPH] 1.